Reading from the N-terminus, the 326-residue chain is Bifunctional pinoresinol-lariciresinol reductase (326 aa).

NADP(+)-binding positions include G25–G31, R50, and K59. Residue K153 is the Proton acceptor of the active site. R157 contributes to the NADP(+) binding site. Substrate is bound at residue H285.

It belongs to the NmrA-type oxidoreductase family. Isoflavone reductase subfamily. As to quaternary structure, dimer.

It catalyses the reaction (+)-lariciresinol + NADP(+) = (+)-pinoresinol + NADPH + H(+). The catalysed reaction is (-)-secoisolariciresinol + NADP(+) = (+)-lariciresinol + NADPH + H(+). Reductase involved in lignan biosynthesis. Catalyzes the enantioselective conversion of (+)-pinoresinol into (+)-lariciresinol and of (+)-lariciresinol into (-)-secoisolariciresinol. Abstracts the 4R-hydride from the NADPH cofactor during catalysis. This chain is Bifunctional pinoresinol-lariciresinol reductase (PLR1), found in Linum album (Flax).